A 535-amino-acid polypeptide reads, in one-letter code: L-aspartate oxidase (535 aa).

Residues 16 to 19 (SGAA), K38, 45 to 52 (ATFYAQGG), and D223 each bind FAD. The Proton donor/acceptor role is filled by R290. FAD contacts are provided by residues E375 and 391–392 (SL).

It belongs to the FAD-dependent oxidoreductase 2 family. NadB subfamily. Requires FAD as cofactor.

The protein resides in the cytoplasm. It carries out the reaction L-aspartate + O2 = iminosuccinate + H2O2. Its pathway is cofactor biosynthesis; NAD(+) biosynthesis; iminoaspartate from L-aspartate (oxidase route): step 1/1. Catalyzes the oxidation of L-aspartate to iminoaspartate, the first step in the de novo biosynthesis of NAD(+). This Vibrio cholerae serotype O1 (strain ATCC 39315 / El Tor Inaba N16961) protein is L-aspartate oxidase (nadB).